The primary structure comprises 370 residues: Cytochrome b (370 aa).

4 helical membrane-spanning segments follow: residues 25 to 45, 69 to 90, 105 to 125, and 170 to 190; these read FGSMLLACLTLQLLTGFFLAV, WMMQNLHAIGASMFFICIYIHI, WLSGTTLLIMLMATAFFGYVL, and FFALHFILPFGIISLSSLHIL. Heme b-binding residues include histidine 75 and histidine 89. Residues histidine 174 and histidine 188 each contribute to the heme b site. Histidine 193 contributes to the a ubiquinone binding site. The next 4 membrane-spanning stretches (helical) occupy residues 218–238, 280–300, 312–332, and 339–358; these read YKDMLMLTIMTIMLLTIVSFF, LGGALALXMSIMILLTLPFTH, FMQLTFWTFTATFLVISWTAT, and FTTISQVAALMYFLFFISNP.

This sequence belongs to the cytochrome b family. In terms of assembly, the cytochrome bc1 complex contains 3 respiratory subunits (MT-CYB, CYC1 and UQCRFS1), 2 core proteins (UQCRC1 and UQCRC2) and probably 6 low-molecular weight proteins. Heme b is required as a cofactor.

The protein localises to the mitochondrion inner membrane. Component of the ubiquinol-cytochrome c reductase complex (complex III or cytochrome b-c1 complex) that is part of the mitochondrial respiratory chain. The b-c1 complex mediates electron transfer from ubiquinol to cytochrome c. Contributes to the generation of a proton gradient across the mitochondrial membrane that is then used for ATP synthesis. In Chilabothrus exsul (Abaco Island boa), this protein is Cytochrome b (MT-CYB).